We begin with the raw amino-acid sequence, 1013 residues long: Nucleotide-binding oligomerization domain-containing protein 2 (1013 aa).

CARD domains are found at residues 1–82 (MCSQ…AVQE) and 107–178 (LQSH…HVQK). An ATG16L1-binding motif motif is present at residues 36 to 50 (WEVLSWEDYEGLRLV). ADP-binding residues include Thr212, Tyr225, Thr226, Gly275, Ser276, Gly277, Lys278, Ser279, and Thr280. The segment at 214 to 247 (DGAENLCLEDIYTENTLEVRTEVGMAGPLHKSPA) is required for CARD9 binding. The region spanning 266 to 402 (DTVLVVGEAG…RKVLTSRPDA (137 aa)) is the NACHT domain. 272 to 279 (GEAGSGKS) provides a ligand contact to ATP. The S-palmitoyl cysteine moiety is linked to residue Cys368. His576 provides a ligand contact to ADP. LRR repeat units follow at residues 764–785 (RPVA…QLLP), 789–812 (ACKA…IEHA), 817–838 (QLQK…SVAQ), 845–857 (NFLA…NHIT), 873–893 (SLQF…QALA), 901–922 (SLKW…ALAS), 929–949 (ALEE…CSLA), 957–978 (SLKV…ALLQ), and 985–1005 (TILE…EALS).

Belongs to the NOD1-NOD2 family. Homooligomer: homooligomerizes following muramyl dipeptide (MDP)-binding, promoting RIPK2 recruitment. Interacts (via CARD domain) with RIPK2 (via CARD domain). Following RIPK2 recruitment, RIPK2 homooligomerizes via its CARD domain and forms long filaments named RIPosomes. Interacts (via CARD domain) with ubiquitin; inhibiting interaction with RIPK2. Component of a signaling complex consisting of ARHGEF2, NOD2 and RIPK2. Interacts with ANKRD17 (via N-terminus). Interacts with HSPA1A; the interaction enhances NOD2 stability. Interacts (via both CARD domains) with HSP90; the interaction enhances NOD2 stability. Interacts (via CARD domain) with SOCS3; the interaction promotes NOD2 degradation. Interacts (via CARD domain) with ERBIN; the interaction inhibits activation of NOD2. Interacts with MAPKBP1; the interaction is enhanced in the presence of muramyl dipeptide (MDP) and inhibits NOD2 homooligomerization and activation. Interacts with INAVA; the interaction takes place upon Pattern recognition receptor (PRR) stimulation. Interacts (via NACHT domain) with CARD9. Interacts (via CARD domain) with CASP1; this interaction leads to IL1B processing. Also interacts with CASP4. Interacts with NLRP1; this interaction is enhanced in the presence of muramyl dipeptide (MDP) and leads to increased IL1B release. Interacts with NLRP12; this interaction promotes degradation of NOD2 through the ubiquitin-proteasome pathway. Interacts with ANKHD1, C10orf67, CHMP5, DOCK7, ENTR1, KRT15, LDOC1, PPP1R12C, PPP2R3B, TRIM41 and VIM. Interacts with MAVS; interaction takes place following single-stranded RNA (ssRNA)-binding. Interacts with ATG16L1. Interacts with IRGM; promoting IRGM 'Lys-63'-linked polyubiquitination, which is required for interactions with the core autophagy factors. Palmitoylated by ZDHHC5; palmitoylation is required for proper recruitment to the bacterial entry site and hence for proper signaling upon cognate peptidoglycan detection. Palmitoylation promotes localization to the cell membrane. Palmitoylation protects from SQSTM1/p62-dependent autophagic degradation. Post-translationally, polyubiquitinated by TRIM27, leading to proteasome-mediated degradation. Polyubiquitinated and degraded following muramyl dipeptide (MDP) stimulation, conferring MDP tolerance and preventing septic shock. In terms of processing, degraded via selective autophagy following interaction with IRGM. IRGM promotes NOD2-RIPK2 RIPosome recruitment to autophagosome membranes, promoting their SQSTM1/p62-dependent autophagic degradation. O-glycosylated by OGT, O-GlcNAcylation increases protein stability.

The protein localises to the cell membrane. Its subcellular location is the basolateral cell membrane. The protein resides in the cytoplasm. It localises to the mitochondrion. With respect to regulation, ADP-binding promotes an inactive closed conformation. Functionally, pattern recognition receptor (PRR) that detects bacterial peptidoglycan fragments and other danger signals and plays an important role in gastrointestinal immunity. Specifically activated by muramyl dipeptide (MDP), a fragment of bacterial peptidoglycan found in every bacterial peptidoglycan type. NOD2 specifically recognizes and binds 6-O-phospho-MDP, the phosphorylated form of MDP, which is generated by NAGK. 6-O-phospho-MDP-binding triggers oligomerization that facilitates the binding and subsequent activation of the proximal adapter receptor-interacting RIPK2. Following recruitment, RIPK2 undergoes 'Met-1'- (linear) and 'Lys-63'-linked polyubiquitination by E3 ubiquitin-protein ligases XIAP, BIRC2, BIRC3 and the LUBAC complex, becoming a scaffolding protein for downstream effectors, triggering activation of the NF-kappa-B and MAP kinases signaling. This in turn leads to the transcriptional activation of hundreds of genes involved in immune response. Its ability to detect bacterial MDP plays a central role in maintaining the equilibrium between intestinal microbiota and host immune responses to control inflammation. An imbalance in this relationship results in dysbiosis, whereby pathogenic bacteria prevail on commensals, causing damage in the intestinal epithelial barrier as well as allowing bacterial invasion and inflammation. Acts as a regulator of appetite by sensing MDP in a subset of brain neurons: microbiota-derived MDP reach the brain, where they bind and activate NOD2 in inhibitory hypothalamic neurons, decreasing neuronal activity, thereby regulating satiety and body temperature. NOD2-dependent MDP-sensing of bacterial cell walls in the intestinal epithelial compartment contributes to sustained postnatal growth upon undernutrition. Also plays a role in antiviral response by acting as a sensor of single-stranded RNA (ssRNA) from viruses: upon ssRNA-binding, interacts with MAVS, leading to activation of interferon regulatory factor-3/IRF3 and expression of type I interferon. Also acts as a regulator of autophagy in dendritic cells via its interaction with ATG16L1, possibly by recruiting ATG16L1 at the site of bacterial entry. NOD2 activation in the small intestine crypt also contributes to intestinal stem cells survival and function: acts by promoting mitophagy via its association with ATG16L1. In addition to its main role in innate immunity, also regulates the adaptive immune system by acting as regulator of helper T-cell and regulatory T-cells (Tregs). Besides recognizing pathogens, also involved in the endoplasmic reticulum stress response: acts by sensing and binding to the cytosolic metabolite sphingosine-1-phosphate generated in response to endoplasmic reticulum stress, initiating an inflammation process that leads to activation of the NF-kappa-B and MAP kinases signaling. May also be involved in NLRP1 activation following activation by MDP, leading to CASP1 activation and IL1B release in macrophages. This is Nucleotide-binding oligomerization domain-containing protein 2 from Oryctolagus cuniculus (Rabbit).